A 201-amino-acid polypeptide reads, in one-letter code: Dephospho-CoA kinase (201 aa).

The 192-residue stretch at 10–201 folds into the DPCK domain; it reads LIGLTGGIAT…PQIIKAWHHR (192 aa). 18 to 23 contributes to the ATP binding site; it reads ATGKST.

The protein belongs to the CoaE family.

It localises to the cytoplasm. The catalysed reaction is 3'-dephospho-CoA + ATP = ADP + CoA + H(+). The protein operates within cofactor biosynthesis; coenzyme A biosynthesis; CoA from (R)-pantothenate: step 5/5. In terms of biological role, catalyzes the phosphorylation of the 3'-hydroxyl group of dephosphocoenzyme A to form coenzyme A. This Synechocystis sp. (strain ATCC 27184 / PCC 6803 / Kazusa) protein is Dephospho-CoA kinase.